The sequence spans 377 residues: Probable transposase for insertion sequence element IS5377 (377 aa).

The protein belongs to the transposase 11 family.

This chain is Probable transposase for insertion sequence element IS5377, found in Geobacillus stearothermophilus (Bacillus stearothermophilus).